The primary structure comprises 510 residues: Scarecrow-like protein 29 (510 aa).

The segment at 90-142 (LDLPPEIQQPNDQSRKRSHDGFLEAQQVKKSARSKRKAIKSSEKSSKDGNKEG) is disordered. The segment covering 102-111 (QSRKRSHDGF) has biased composition (basic and acidic residues). The segment covering 119 to 128 (KSARSKRKAI) has biased composition (basic residues). Positions 129–142 (KSSEKSSKDGNKEG) are enriched in basic and acidic residues. The 375-residue stretch at 136 to 510 (KDGNKEGRWA…EAVSFCSLWK (375 aa)) folds into the GRAS domain. Residues 143 to 205 (RWAEKLLNPC…HLSSSSVSSS (63 aa)) form a leucine repeat I (LRI) region. The VHIID stretch occupies residues 224–294 (LLKFYEVSPW…GPPPRVRITV (71 aa)). The VHIID signature appears at 259–263 (LHIID). The leucine repeat II (LRII) stretch occupies residues 312 to 337 (NYGSQLLGFARSLKINLQISVLDKLQ). The tract at residues 347–435 (LIVCAQFRLH…RKLMEGEATK (89 aa)) is PFYRE. Positions 438 to 510 (MNAGDMNEGK…EAVSFCSLWK (73 aa)) are SAW.

It belongs to the GRAS family. Expressed in seedlings, roots and flowers.

Its subcellular location is the nucleus. In terms of biological role, probable transcription factor involved in plant development. The chain is Scarecrow-like protein 29 (SCL29) from Arabidopsis thaliana (Mouse-ear cress).